The primary structure comprises 438 residues: CBL-interacting protein kinase 32 (438 aa).

The Protein kinase domain maps to 13 to 268 (YELGRTIGEG…IPEILEDEWF (256 aa)). Residues 19 to 27 (IGEGTFAKV) and Lys42 each bind ATP. Asp136 serves as the catalytic Proton acceptor. The tract at residues 154–183 (DFGLSALSQQIKDDGLLHTTCGTPNYVAPE) is activation loop. One can recognise an NAF domain in the interval 305–329 (EEPEALNAFELISMSAGLNLGNLFD). The tract at residues 335 to 364 (KRETRFTSKCPPKEIVRKIEEAAKPLGFDV) is PPI.

The protein belongs to the protein kinase superfamily. CAMK Ser/Thr protein kinase family. SNF1 subfamily. Requires Mn(2+) as cofactor.

The enzyme catalyses L-seryl-[protein] + ATP = O-phospho-L-seryl-[protein] + ADP + H(+). The catalysed reaction is L-threonyl-[protein] + ATP = O-phospho-L-threonyl-[protein] + ADP + H(+). In terms of biological role, CIPK serine-threonine protein kinases interact with CBL proteins. Binding of a CBL protein to the regulatory NAF domain of CIPK protein lead to the activation of the kinase in a calcium-dependent manner. This chain is CBL-interacting protein kinase 32 (CIPK32), found in Oryza sativa subsp. japonica (Rice).